Reading from the N-terminus, the 186-residue chain is MKKTQYNNLVSSYARVLFHVSGSRLGIIREEVEFLLAFFKDQRDVFVYLSHPMISFAHKKEVMLSINEHLSENLVKFIMVIFANKRSSLLILILEKFLSLARENENEFEITIKSAETLKESDIKIITESLSFLGKIIKVSNVVDPSILGGFVVRYGFNLIDASLKSYLDRLVDLSKMEILKVRNFV.

Belongs to the ATPase delta chain family. In terms of assembly, F-type ATPases have 2 components, F(1) - the catalytic core - and F(0) - the membrane proton channel. F(1) has five subunits: alpha(3), beta(3), gamma(1), delta(1), epsilon(1). F(0) has three main subunits: a(1), b(2) and c(10-14). The alpha and beta chains form an alternating ring which encloses part of the gamma chain. F(1) is attached to F(0) by a central stalk formed by the gamma and epsilon chains, while a peripheral stalk is formed by the delta and b chains.

It is found in the cell inner membrane. Functionally, f(1)F(0) ATP synthase produces ATP from ADP in the presence of a proton or sodium gradient. F-type ATPases consist of two structural domains, F(1) containing the extramembraneous catalytic core and F(0) containing the membrane proton channel, linked together by a central stalk and a peripheral stalk. During catalysis, ATP synthesis in the catalytic domain of F(1) is coupled via a rotary mechanism of the central stalk subunits to proton translocation. Its function is as follows. This protein is part of the stalk that links CF(0) to CF(1). It either transmits conformational changes from CF(0) to CF(1) or is implicated in proton conduction. This chain is ATP synthase subunit delta, found in Wolbachia sp. subsp. Drosophila simulans (strain wRi).